The sequence spans 502 residues: Cytochrome P450 71B10 (502 aa).

The chain crosses the membrane as a helical span at residues 1 to 21 (MTVLWFVSLILLISILLVAVK). Cys-443 lines the heme pocket.

Belongs to the cytochrome P450 family. Heme is required as a cofactor.

The protein resides in the membrane. This chain is Cytochrome P450 71B10 (CYP71B10), found in Arabidopsis thaliana (Mouse-ear cress).